We begin with the raw amino-acid sequence, 308 residues long: Inosose dehydratase (308 aa).

This sequence belongs to the IolE/MocC family. The cofactor is glutathione. Co(2+) is required as a cofactor. Requires Mn(2+) as cofactor.

It catalyses the reaction scyllo-inosose = 3D-3,5/4-trihydroxycyclohexane-1,2-dione + H2O. It participates in polyol metabolism; myo-inositol degradation into acetyl-CoA; acetyl-CoA from myo-inositol: step 2/7. Its function is as follows. Catalyzes the dehydration of inosose (2-keto-myo-inositol, 2KMI or 2,4,6/3,5-pentahydroxycyclohexanone) to 3D-(3,5/4)-trihydroxycyclohexane-1,2-dione (D-2,3-diketo-4-deoxy-epi-inositol). The sequence is that of Inosose dehydratase from Geobacillus kaustophilus (strain HTA426).